A 202-amino-acid polypeptide reads, in one-letter code: Imidazoleglycerol-phosphate dehydratase (202 aa).

Belongs to the imidazoleglycerol-phosphate dehydratase family.

The protein localises to the cytoplasm. The catalysed reaction is D-erythro-1-(imidazol-4-yl)glycerol 3-phosphate = 3-(imidazol-4-yl)-2-oxopropyl phosphate + H2O. Its pathway is amino-acid biosynthesis; L-histidine biosynthesis; L-histidine from 5-phospho-alpha-D-ribose 1-diphosphate: step 6/9. In Brucella suis (strain ATCC 23445 / NCTC 10510), this protein is Imidazoleglycerol-phosphate dehydratase.